We begin with the raw amino-acid sequence, 144 residues long: Transcriptional regulator SlyA (144 aa).

Positions 2 to 135 constitute an HTH marR-type domain; the sequence is ESPLGSDLSR…LSQMISKLEK (134 aa). The H-T-H motif DNA-binding region spans 49-72; it reads QIQLAKAIGIEQPSLVRTLDQLEE.

This sequence belongs to the SlyA family. In terms of assembly, homodimer.

Its function is as follows. Transcription regulator that can specifically activate or repress expression of target genes. The sequence is that of Transcriptional regulator SlyA from Wigglesworthia glossinidia brevipalpis.